Consider the following 930-residue polypeptide: Isoleucine--tRNA ligase (930 aa).

The segment at 1–21 is disordered; that stretch reads MRVKDTLNLGKTKFPMRGRLP. Positions 57 to 67 match the 'HIGH' region motif; the sequence is PYANGPIHIGH. E555 provides a ligand contact to L-isoleucyl-5'-AMP. The 'KMSKS' region signature appears at 596–600; that stretch reads KMSKS. Residue K599 participates in ATP binding. Residues C889, C892, C909, and C912 each coordinate Zn(2+).

It belongs to the class-I aminoacyl-tRNA synthetase family. IleS type 1 subfamily. Monomer. It depends on Zn(2+) as a cofactor.

It is found in the cytoplasm. The catalysed reaction is tRNA(Ile) + L-isoleucine + ATP = L-isoleucyl-tRNA(Ile) + AMP + diphosphate. In terms of biological role, catalyzes the attachment of isoleucine to tRNA(Ile). As IleRS can inadvertently accommodate and process structurally similar amino acids such as valine, to avoid such errors it has two additional distinct tRNA(Ile)-dependent editing activities. One activity is designated as 'pretransfer' editing and involves the hydrolysis of activated Val-AMP. The other activity is designated 'posttransfer' editing and involves deacylation of mischarged Val-tRNA(Ile). This chain is Isoleucine--tRNA ligase, found in Limosilactobacillus fermentum (strain NBRC 3956 / LMG 18251) (Lactobacillus fermentum).